The following is a 226-amino-acid chain: Uracil-DNA glycosylase (226 aa).

The Proton acceptor role is filled by D64.

Belongs to the uracil-DNA glycosylase (UDG) superfamily. UNG family.

The protein resides in the cytoplasm. It catalyses the reaction Hydrolyzes single-stranded DNA or mismatched double-stranded DNA and polynucleotides, releasing free uracil.. Functionally, excises uracil residues from the DNA which can arise as a result of misincorporation of dUMP residues by DNA polymerase or due to deamination of cytosine. The protein is Uracil-DNA glycosylase of Fusobacterium nucleatum subsp. nucleatum (strain ATCC 25586 / DSM 15643 / BCRC 10681 / CIP 101130 / JCM 8532 / KCTC 2640 / LMG 13131 / VPI 4355).